A 153-amino-acid polypeptide reads, in one-letter code: Cytochrome c-type biogenesis protein CcmE (153 aa).

Residues 1–8 (MTPVQRRR) lie on the Cytoplasmic side of the membrane. The helical; Signal-anchor for type II membrane protein transmembrane segment at 9 to 29 (LAWVLLALLASGLATALVAMA) threads the bilayer. The Extracellular portion of the chain corresponds to 30–153 (LERNIAYLYT…DVPVTAPEVR (124 aa)). Residues His123 and Tyr127 each contribute to the heme site.

The protein belongs to the CcmE/CycJ family.

The protein resides in the cell membrane. Heme chaperone required for the biogenesis of c-type cytochromes. Transiently binds heme delivered by CcmC and transfers the heme to apo-cytochromes in a process facilitated by CcmF and CcmH. This Stenotrophomonas maltophilia (strain K279a) protein is Cytochrome c-type biogenesis protein CcmE.